Reading from the N-terminus, the 396-residue chain is Tryptophan synthase beta chain (396 aa).

K86 is modified (N6-(pyridoxal phosphate)lysine).

This sequence belongs to the TrpB family. As to quaternary structure, tetramer of two alpha and two beta chains. Pyridoxal 5'-phosphate is required as a cofactor.

The catalysed reaction is (1S,2R)-1-C-(indol-3-yl)glycerol 3-phosphate + L-serine = D-glyceraldehyde 3-phosphate + L-tryptophan + H2O. It participates in amino-acid biosynthesis; L-tryptophan biosynthesis; L-tryptophan from chorismate: step 5/5. Its function is as follows. The beta subunit is responsible for the synthesis of L-tryptophan from indole and L-serine. In Yersinia enterocolitica serotype O:8 / biotype 1B (strain NCTC 13174 / 8081), this protein is Tryptophan synthase beta chain.